Reading from the N-terminus, the 397-residue chain is 1-deoxy-D-xylulose 5-phosphate reductoisomerase (397 aa).

Positions 10, 11, 12, 13, 38, and 125 each coordinate NADPH. Lys126 is a binding site for 1-deoxy-D-xylulose 5-phosphate. Glu127 lines the NADPH pocket. Residue Asp151 coordinates Mn(2+). The 1-deoxy-D-xylulose 5-phosphate site is built by Ser152, Glu153, Ser187, and His210. Glu153 lines the Mn(2+) pocket. An NADPH-binding site is contributed by Gly216. Residues Ser223, Asn228, Lys229, and Glu232 each coordinate 1-deoxy-D-xylulose 5-phosphate. Glu232 is a binding site for Mn(2+).

Belongs to the DXR family. In terms of assembly, homodimer. Requires Mg(2+) as cofactor. Mn(2+) serves as cofactor.

It carries out the reaction 2-C-methyl-D-erythritol 4-phosphate + NADP(+) = 1-deoxy-D-xylulose 5-phosphate + NADPH + H(+). Its pathway is isoprenoid biosynthesis; isopentenyl diphosphate biosynthesis via DXP pathway; isopentenyl diphosphate from 1-deoxy-D-xylulose 5-phosphate: step 1/6. In terms of biological role, catalyzes the NADPH-dependent rearrangement and reduction of 1-deoxy-D-xylulose-5-phosphate (DXP) to 2-C-methyl-D-erythritol 4-phosphate (MEP). This is 1-deoxy-D-xylulose 5-phosphate reductoisomerase from Blochmanniella pennsylvanica (strain BPEN).